The sequence spans 624 residues: DNA mismatch repair protein MutL (624 aa).

The span at 340–355 (NKLDTDSHSQSHERGH) shows a compositional bias: basic and acidic residues. Positions 340–415 (NKLDTDSHSQ…RGGATSSYRQ (76 aa)) are disordered. Composition is skewed to polar residues over residues 372–383 (HQTAPSTKASTE) and 391–415 (SPIS…SYRQ).

It belongs to the DNA mismatch repair MutL/HexB family.

Its function is as follows. This protein is involved in the repair of mismatches in DNA. It is required for dam-dependent methyl-directed DNA mismatch repair. May act as a 'molecular matchmaker', a protein that promotes the formation of a stable complex between two or more DNA-binding proteins in an ATP-dependent manner without itself being part of a final effector complex. In Shewanella sediminis (strain HAW-EB3), this protein is DNA mismatch repair protein MutL.